A 414-amino-acid polypeptide reads, in one-letter code: DNA polymerase IV (414 aa).

A UmuC domain is found at 8–189 (IFHIDMNSFY…LPIEEMHGIG (182 aa)). Residues D12 and D108 each contribute to the Mg(2+) site. Residue E109 is part of the active site. The disordered stretch occupies residues 394 to 414 (EESKTRGTSFNRDFFQDEKKR).

It belongs to the DNA polymerase type-Y family. Monomer. Mg(2+) serves as cofactor.

It is found in the cytoplasm. The catalysed reaction is DNA(n) + a 2'-deoxyribonucleoside 5'-triphosphate = DNA(n+1) + diphosphate. In terms of biological role, poorly processive, error-prone DNA polymerase involved in untargeted mutagenesis. Copies undamaged DNA at stalled replication forks, which arise in vivo from mismatched or misaligned primer ends. These misaligned primers can be extended by PolIV. Exhibits no 3'-5' exonuclease (proofreading) activity. May be involved in translesional synthesis, in conjunction with the beta clamp from PolIII. In Bacillus velezensis (strain DSM 23117 / BGSC 10A6 / LMG 26770 / FZB42) (Bacillus amyloliquefaciens subsp. plantarum), this protein is DNA polymerase IV.